Reading from the N-terminus, the 126-residue chain is Large ribosomal subunit protein bL12 (126 aa).

It belongs to the bacterial ribosomal protein bL12 family. In terms of assembly, homodimer. Part of the ribosomal stalk of the 50S ribosomal subunit. Forms a multimeric L10(L12)X complex, where L10 forms an elongated spine to which 2 to 4 L12 dimers bind in a sequential fashion. Binds GTP-bound translation factors.

Its function is as follows. Forms part of the ribosomal stalk which helps the ribosome interact with GTP-bound translation factors. Is thus essential for accurate translation. This chain is Large ribosomal subunit protein bL12, found in Bordetella avium (strain 197N).